We begin with the raw amino-acid sequence, 491 residues long: uncharacterized protein (491 aa).

A PE domain is found at 1–92 (MSFVIASPEA…GGGSYASAEI (92 aa)). Disordered stretches follow at residues 114-156 (PLVG…AGGA), 376-400 (AGGSGGSGAPGSVSSGGVGGAGNPG), and 419-491 (AGQG…GPDG). The segment covering 128-145 (GQPGGDGGILWGNGGNGG) has biased composition (gly residues). Over residues 432–480 (GGPGGVGGHGGTAILFGDGGAGGAGAAGGPGTPDGAAGPGGSGGTGGLL) the composition is skewed to gly residues.

It belongs to the mycobacterial PE family. PGRS subfamily.

This is an uncharacterized protein from Mycobacterium bovis (strain ATCC BAA-935 / AF2122/97).